Consider the following 261-residue polypeptide: Hydroxyethylthiazole kinase (261 aa).

Substrate is bound at residue methionine 40. 2 residues coordinate ATP: lysine 116 and threonine 162. Glycine 189 is a binding site for substrate.

Belongs to the Thz kinase family. Mg(2+) serves as cofactor.

The catalysed reaction is 5-(2-hydroxyethyl)-4-methylthiazole + ATP = 4-methyl-5-(2-phosphooxyethyl)-thiazole + ADP + H(+). It functions in the pathway cofactor biosynthesis; thiamine diphosphate biosynthesis; 4-methyl-5-(2-phosphoethyl)-thiazole from 5-(2-hydroxyethyl)-4-methylthiazole: step 1/1. Its function is as follows. Catalyzes the phosphorylation of the hydroxyl group of 4-methyl-5-beta-hydroxyethylthiazole (THZ). The polypeptide is Hydroxyethylthiazole kinase (Methanosarcina mazei (strain ATCC BAA-159 / DSM 3647 / Goe1 / Go1 / JCM 11833 / OCM 88) (Methanosarcina frisia)).